The primary structure comprises 637 residues: MMSYSERLGGPAVSPLPVRGRHMVHGAAFAYVPSPQVLHRIPGTTTYAISSLSPVALTEHSCPYGEVLECHDPLPAKLAQEEEQKPEPRLSQKLAQVGTKLLKVPLMLGFLYLFVCSLDVLSSAFQLAGGKVAGDIFKDNAILSNPVAGLVVGILVTVLVQSSSTSTSIIVSMVSSGLLEVSSAIPIIMGSNIGTSVTNTIVALMQAGDRTDFRRAFAGATVHDCFNWLSVLVLLPLEAATGYLHHVTGLVVASFNIRGGRDAPDLLKVITEPFTKLIIQLDKSVITSIAVGDESLRNHSLIRIWCQPETKEASTSMSRVEAIGSLANTTMEKCNHIFVDTGLPDLAVGLILLAGSLVVLCTCLILLVKMLNSLLKGQVANVIQKVINTDFPAPFTWVTGYFAMVVGASMTFVVQSSSVFTSAITPLIGLGVISIERAYPLTLGSNIGTTTTAILAALASPREKLSSSFQIALCHFFFNISGILLWYPLPCTRLPIRMAKALGKRTAKYRWFAVLYLLVCFLLLPSLVFGISMAGWQAMVGVGTPFGALLAFVVLVNVLQSRSPGHLPKWLQTWDFLPRWMHSLQPLDGLITRATLCYARPEPRSPQLPPRVFLEELPPATPSPRLALPAHHNATRL.

Over 1–103 the chain is Cytoplasmic; it reads MMSYSERLGG…LAQVGTKLLK (103 aa). Residues S14 and S34 each carry the phosphoserine modification. A helical transmembrane segment spans residues 104 to 125; it reads VPLMLGFLYLFVCSLDVLSSAF. The Extracellular segment spans residues 126 to 145; sequence QLAGGKVAGDIFKDNAILSN. Residues 146–163 traverse the membrane as a helical segment; the sequence is PVAGLVVGILVTVLVQSS. The Cytoplasmic segment spans residues 164–216; sequence STSTSIIVSMVSSGLLEVSSAIPIIMGSNIGTSVTNTIVALMQAGDRTDFRRA. The helical transmembrane segment at 217-236 threads the bilayer; it reads FAGATVHDCFNWLSVLVLLP. Cystine bridges form between C225–C520 and C306–C334. Residues 237-345 are Extracellular-facing; that stretch reads LEAATGYLHH…HIFVDTGLPD (109 aa). N-linked (GlcNAc...) asparagine glycosylation is found at N298 and N328. Residues 346 to 368 form a helical membrane-spanning segment; the sequence is LAVGLILLAGSLVVLCTCLILLV. The Cytoplasmic segment spans residues 369–410; that stretch reads KMLNSLLKGQVANVIQKVINTDFPAPFTWVTGYFAMVVGASM. A helical membrane pass occupies residues 411–434; the sequence is TFVVQSSSVFTSAITPLIGLGVIS. Topologically, residues 435-464 are extracellular; the sequence is IERAYPLTLGSNIGTTTTAILAALASPREK. A helical transmembrane segment spans residues 465–485; that stretch reads LSSSFQIALCHFFFNISGILL. Residues 486-511 are Cytoplasmic-facing; it reads WYPLPCTRLPIRMAKALGKRTAKYRW. A Phosphothreonine; by PKC modification is found at T506. The helical transmembrane segment at 512 to 532 threads the bilayer; that stretch reads FAVLYLLVCFLLLPSLVFGIS. Residues 533–537 lie on the Extracellular side of the membrane; the sequence is MAGWQ. A helical membrane pass occupies residues 538-559; it reads AMVGVGTPFGALLAFVVLVNVL. The Cytoplasmic portion of the chain corresponds to 560-637; sequence QSRSPGHLPK…LPAHHNATRL (78 aa). S605 bears the Phosphoserine mark. Residue T621 is modified to Phosphothreonine. S623 bears the Phosphoserine mark.

It belongs to the SLC34A transporter family. As to quaternary structure, interacts via its C-terminal region with NHERF4. Interacts with NHERF1. Interacts with TMEM174; regulates SLC34A1 internalization by PTH and FGF23. In terms of tissue distribution, kidney.

It localises to the apical cell membrane. The protein localises to the cell membrane. It catalyses the reaction 3 Na(+)(out) + phosphate(out) = 3 Na(+)(in) + phosphate(in). With respect to regulation, transport activity is significantly increased in response to dietary phosphate deprivation. Functionally, involved in actively transporting phosphate into cells via Na(+) cotransport in the renal brush border membrane. The cotransport has a Na(+):Pi stoichiometry of 3:1 and is electrogenic. The protein is Sodium-dependent phosphate transport protein 2A of Rattus norvegicus (Rat).